Consider the following 704-residue polypeptide: Polyribonucleotide nucleotidyltransferase (704 aa).

The Mg(2+) site is built by aspartate 487 and aspartate 493. Residues 554–613 form the KH domain; sequence PRLLTIKIHPDKIREVIGKGGSTIQAITKETGTQIDIQDDGTIIIASVNAIAAQAAKSRI. Residues 623–691 enclose the S1 motif domain; it reads GRIYEGKVAK…KQGRIRLSIK (69 aa).

The protein belongs to the polyribonucleotide nucleotidyltransferase family. As to quaternary structure, component of the RNA degradosome, which is a multiprotein complex involved in RNA processing and mRNA degradation. Requires Mg(2+) as cofactor.

The protein localises to the cytoplasm. The enzyme catalyses RNA(n+1) + phosphate = RNA(n) + a ribonucleoside 5'-diphosphate. In terms of biological role, involved in mRNA degradation. Catalyzes the phosphorolysis of single-stranded polyribonucleotides processively in the 3'- to 5'-direction. The polypeptide is Polyribonucleotide nucleotidyltransferase (Xanthomonas campestris pv. campestris (strain 8004)).